Here is a 409-residue protein sequence, read N- to C-terminus: Nucleoprotein (409 aa).

4 disordered regions span residues 1–32 (MASGKAAGKSDAPTPIIKLGGPKPPKIGSSGN), 47–84 (PQPKFEGSGVPDNNNIKPSQQHGYWRRQARYKPGKSGR), 121–145 (ADTKSRSNQGTRDPDKFDQYPLRFS), and 164–194 (RSGRSTAASSAASSRAPSREGSRGRRSGAED). Residues 29 to 160 (SSGNASWFQA…GNFRWDFIPL (132 aa)) form an RNA-binding region. Positions 31–156 (GNASWFQAIK…GGPDGNFRWD (126 aa)) constitute a CoV N NTD domain. Over residues 57 to 68 (PDNNNIKPSQQH) the composition is skewed to polar residues. Positions 70 to 84 (YWRRQARYKPGKSGR) are enriched in basic residues. Residues 164 to 179 (RSGRSTAASSAASSRA) show a composition bias toward low complexity. Residues 180–192 (PSREGSRGRRSGA) are compositionally biased toward basic and acidic residues. Residue Ser-190 is modified to Phosphoserine; by host. One can recognise a CoV N CTD domain in the interval 215 to 331 (TKAKADEMAH…QCVDGVGTRP (117 aa)). The interval 226 to 333 (RYCKRTIPPG…VDGVGTRPKD (108 aa)) is dimerization. Cys-320 and Cys-323 are disulfide-bonded. Positions 326–409 (GVGTRPKDDE…GDSALGENEL (84 aa)) are disordered. Over residues 358–367 (QRPKKEKKPK) the composition is skewed to basic residues. Basic and acidic residues predominate over residues 368-384 (KQDDEVDKALTSDEERN). A Phosphothreonine; by host modification is found at Thr-378. Ser-379 carries the phosphoserine; by host modification.

It belongs to the gammacoronavirus nucleocapsid protein family. As to quaternary structure, homooligomer. Both monomeric and oligomeric forms interact with RNA. Interacts with protein M. Interacts with NSP3; this interaction serves to tether the genome to the newly translated replicase-transcriptase complex at a very early stage of infection. ADP-ribosylated. The ADP-ribosylation is retained in the virion during infection. In terms of processing, phosphorylated on serine and threonine residues.

The protein localises to the virion. It is found in the host endoplasmic reticulum-Golgi intermediate compartment. The protein resides in the host Golgi apparatus. Packages the positive strand viral genome RNA into a helical ribonucleocapsid (RNP) and plays a fundamental role during virion assembly through its interactions with the viral genome and membrane protein M. Plays an important role in enhancing the efficiency of subgenomic viral RNA transcription as well as viral replication. The chain is Nucleoprotein from Gallus gallus (Chicken).